The following is a 119-amino-acid chain: Putative mating-type protein A2 (119 aa).

Residues K38 to T100 constitute a DNA-binding region (homeobox; TALE-type).

Belongs to the TALE/M-ATYP homeobox family.

The protein resides in the nucleus. Its function is as follows. Probably not a functional protein. Cells lacking A2 show no obvious alterations in mating, sporulation and cell growth. The chain is Putative mating-type protein A2 (MATA2) from Saccharomyces cerevisiae (Baker's yeast).